A 382-amino-acid polypeptide reads, in one-letter code: Lipid-A-disaccharide synthase (382 aa).

The protein belongs to the LpxB family.

It carries out the reaction 2-N,3-O-bis[(3R)-3-hydroxytetradecanoyl]-alpha-D-glucosaminyl 1-phosphate + UDP-2-N,3-O-bis[(3R)-3-hydroxytetradecanoyl]-alpha-D-glucosamine = lipid A disaccharide (E. coli) + UDP + H(+). The catalysed reaction is a lipid X + a UDP-2-N,3-O-bis[(3R)-3-hydroxyacyl]-alpha-D-glucosamine = a lipid A disaccharide + UDP + H(+). It functions in the pathway glycolipid biosynthesis; lipid IV(A) biosynthesis; lipid IV(A) from (3R)-3-hydroxytetradecanoyl-[acyl-carrier-protein] and UDP-N-acetyl-alpha-D-glucosamine: step 5/6. Condensation of UDP-2,3-diacylglucosamine and 2,3-diacylglucosamine-1-phosphate to form lipid A disaccharide, a precursor of lipid A, a phosphorylated glycolipid that anchors the lipopolysaccharide to the outer membrane of the cell. This chain is Lipid-A-disaccharide synthase, found in Shigella flexneri serotype 5b (strain 8401).